Here is a 356-residue protein sequence, read N- to C-terminus: Peptide chain release factor 1 (356 aa).

Residue Gln230 is modified to N5-methylglutamine. Residues 279–289 (ALDSARSEARK) show a composition bias toward basic and acidic residues. The interval 279–299 (ALDSARSEARKSQVGSGDRSE) is disordered.

The protein belongs to the prokaryotic/mitochondrial release factor family. In terms of processing, methylated by PrmC. Methylation increases the termination efficiency of RF1.

Its subcellular location is the cytoplasm. Functionally, peptide chain release factor 1 directs the termination of translation in response to the peptide chain termination codons UAG and UAA. The polypeptide is Peptide chain release factor 1 (prfA) (Caulobacter vibrioides (strain ATCC 19089 / CIP 103742 / CB 15) (Caulobacter crescentus)).